The sequence spans 243 residues: Small ribosomal subunit protein uS3 (243 aa).

The KH type-2 domain occupies 39–110 (IRTFIQKKYG…QVRINVVEVE (72 aa)). The segment at 216 to 243 (KTIPVGASPKRKAGRRPQQFEDRSNENS) is disordered. Residues 233–243 (QQFEDRSNENS) show a composition bias toward basic and acidic residues.

The protein belongs to the universal ribosomal protein uS3 family. Part of the 30S ribosomal subunit. Forms a tight complex with proteins S10 and S14.

In terms of biological role, binds the lower part of the 30S subunit head. Binds mRNA in the 70S ribosome, positioning it for translation. The sequence is that of Small ribosomal subunit protein uS3 from Prochlorococcus marinus (strain MIT 9312).